We begin with the raw amino-acid sequence, 102 residues long: MNILPISAFFLLYLGHSLAQENVCNLPVDEGVCRALFKRFYYEPATDSCKEFYYGGCEGNGNRFKSKKECILKCQKNKQLIKTRKRKPKKTTKPPIPIISLD.

An N-terminal signal peptide occupies residues 1–19; sequence MNILPISAFFLLYLGHSLA. In terms of domain architecture, BPTI/Kunitz inhibitor spans 24–74; the sequence is CNLPVDEGVCRALFKRFYYEPATDSCKEFYYGGCEGNGNRFKSKKECILKC. Cystine bridges form between Cys24–Cys74, Cys33–Cys57, and Cys49–Cys70. Residues 83–92 are compositionally biased toward basic residues; it reads TRKRKPKKTT. The interval 83 to 102 is disordered; that stretch reads TRKRKPKKTTKPPIPIISLD.

It belongs to the venom Kunitz-type family. Interacts with mouse, bovine and human coagulation factor X (F10) (activated). Interacts with host elastase. Salivary gland (at protein level). Not detected in female carcass without head and salivary glands. Not detected in males.

The protein resides in the secreted. Salivary anticoagulant that inhibits plasma clotting in the host. Strongly inhibits host elastase, coagulation factors Xa (F10) and cathepsin G (CTSG). Inhibits host plasmin (PLG), kallikrein, trypsin, beta-tryptase and coagulation factor XIa (F11). This is Simukunin from Simulium vittatum (Striped black fly).